We begin with the raw amino-acid sequence, 239 residues long: MGRKWANIKEKKASKDKTNSRIYAKFGIEIYVAAKSGDPDPHANQKLRFVIERAKTYNVPKHIIDRAIEKAKGTGDETYSELRYEGFGPNGSMIIVDALTNNVNRTASDVRAAYSKNGGNMGVSGSVAYMFDNTAIFGVEGKDADELLELLMEVDIDVRDILDEDGQAIIYAEPEDFHKVQEGLKAAGIEEFTVAEIEMIPQNDIQLSGEDLEKFEKLIDALEDLEDVQKVYHNVELED.

This sequence belongs to the TACO1 family. YeeN subfamily.

The protein resides in the cytoplasm. This chain is Probable transcriptional regulatory protein LMOf2365_0385, found in Listeria monocytogenes serotype 4b (strain F2365).